The chain runs to 227 residues: Phosphoribosylformylglycinamidine synthase subunit PurQ (227 aa).

Positions 2 to 226 (KFAVIQFPGS…VQAWKEEQVN (225 aa)) constitute a Glutamine amidotransferase type-1 domain. Catalysis depends on Cys86, which acts as the Nucleophile. Active-site residues include His195 and Glu197.

As to quaternary structure, part of the FGAM synthase complex composed of 1 PurL, 1 PurQ and 2 PurS subunits.

Its subcellular location is the cytoplasm. The enzyme catalyses N(2)-formyl-N(1)-(5-phospho-beta-D-ribosyl)glycinamide + L-glutamine + ATP + H2O = 2-formamido-N(1)-(5-O-phospho-beta-D-ribosyl)acetamidine + L-glutamate + ADP + phosphate + H(+). It catalyses the reaction L-glutamine + H2O = L-glutamate + NH4(+). It functions in the pathway purine metabolism; IMP biosynthesis via de novo pathway; 5-amino-1-(5-phospho-D-ribosyl)imidazole from N(2)-formyl-N(1)-(5-phospho-D-ribosyl)glycinamide: step 1/2. Functionally, part of the phosphoribosylformylglycinamidine synthase complex involved in the purines biosynthetic pathway. Catalyzes the ATP-dependent conversion of formylglycinamide ribonucleotide (FGAR) and glutamine to yield formylglycinamidine ribonucleotide (FGAM) and glutamate. The FGAM synthase complex is composed of three subunits. PurQ produces an ammonia molecule by converting glutamine to glutamate. PurL transfers the ammonia molecule to FGAR to form FGAM in an ATP-dependent manner. PurS interacts with PurQ and PurL and is thought to assist in the transfer of the ammonia molecule from PurQ to PurL. The protein is Phosphoribosylformylglycinamidine synthase subunit PurQ of Listeria welshimeri serovar 6b (strain ATCC 35897 / DSM 20650 / CCUG 15529 / CIP 8149 / NCTC 11857 / SLCC 5334 / V8).